A 429-amino-acid polypeptide reads, in one-letter code: Phosphoribosylamine--glycine ligase (429 aa).

Residues 109–316 form the ATP-grasp domain; sequence KDFLARHNIP…LVELCQAAIA (208 aa). Residue 135–196 coordinates ATP; that stretch reads VREKGAPIVV…EEFLDGEEAS (62 aa). Residues glutamate 286 and asparagine 288 each contribute to the Mg(2+) site.

Belongs to the GARS family. The cofactor is Mg(2+). Mn(2+) is required as a cofactor.

The catalysed reaction is 5-phospho-beta-D-ribosylamine + glycine + ATP = N(1)-(5-phospho-beta-D-ribosyl)glycinamide + ADP + phosphate + H(+). It functions in the pathway purine metabolism; IMP biosynthesis via de novo pathway; N(1)-(5-phospho-D-ribosyl)glycinamide from 5-phospho-alpha-D-ribose 1-diphosphate: step 2/2. The protein is Phosphoribosylamine--glycine ligase of Vibrio cholerae serotype O1 (strain ATCC 39315 / El Tor Inaba N16961).